A 142-amino-acid chain; its full sequence is Hemoglobin subunit beta (142 aa).

A Globin domain is found at 3 to 142; that stretch reads KLSEDQEHYI…VAEALSSNYH (140 aa). His60 and His89 together coordinate heme b.

This sequence belongs to the globin family. Heterotetramer of two alpha chains and two beta chains. Red blood cells.

In terms of biological role, involved in oxygen transport from gills to the various peripheral tissues. This chain is Hemoglobin subunit beta (HBB), found in Hemitrygon akajei (Red stingray).